The following is a 391-amino-acid chain: Oxygen-dependent coproporphyrinogen-III oxidase, chloroplastic (391 aa).

The segment covering 1–13 (MASSLLTTPSQTL) has biased composition (polar residues). The disordered stretch occupies residues 1–34 (MASSLLTTPSQTLAPNPAAARARRSSPAAAQVSF). Over residues 14–30 (APNPAAARARRSSPAAA) the composition is skewed to low complexity. Positions 125-134 (VLQDGNVFEK) are important for dimerization. S179 lines the substrate pocket. H193 serves as the catalytic Proton donor. Substrate is bound by residues 195 to 197 (NYR) and 349 to 354 (GGRIES). An important for dimerization region spans residues 331 to 366 (YVEFNLVYDRGTTFGLKTGGRIESILVSLPLTARWE).

This sequence belongs to the aerobic coproporphyrinogen-III oxidase family. Homodimer.

It is found in the plastid. Its subcellular location is the chloroplast. The catalysed reaction is coproporphyrinogen III + O2 + 2 H(+) = protoporphyrinogen IX + 2 CO2 + 2 H2O. Its pathway is porphyrin-containing compound metabolism; protoporphyrin-IX biosynthesis; protoporphyrinogen-IX from coproporphyrinogen-III (O2 route): step 1/1. Involved in the heme and chlorophyll biosynthesis. Catalyzes the aerobic oxidative decarboxylation of propionate groups of rings A and B of coproporphyrinogen-III to yield the vinyl groups in protoporphyrinogen-IX. The polypeptide is Oxygen-dependent coproporphyrinogen-III oxidase, chloroplastic (CPX) (Hordeum vulgare (Barley)).